The sequence spans 258 residues: MAVISMKQLLEAGVHFGHQTRRWNPKMAKYIFTERNGIHVIDLQQTVKLADQAYEFIRDAAANEAVILFVGTKKQAAEAVKDEAIRAGQYFINHRWLGGTLTNWGTIQKRIARLKEINRMEEDGTFEVLPKKEVALLNKQRARLEKFLGGIADMPRIPDVMFVVDPHKEQIAVKEAKKLGIPVVAMVDTNTDPDDIDVIIPANDDAIRAVKLITAKMADAIIEGNQGEDSVAAVEAELAAEPASTESIEELVEVVEGK.

It belongs to the universal ribosomal protein uS2 family.

The protein is Small ribosomal subunit protein uS2 of Streptococcus suis (strain 05ZYH33).